Reading from the N-terminus, the 990-residue chain is Tyrosine-protein phosphatase 3 (990 aa).

Disordered regions lie at residues 47-88, 100-193, 246-414, and 431-452; these read QSQS…SPSV, NKIN…SNIE, PNQQ…SFSQ, and KPEM…HNDL. 2 stretches are compositionally biased toward low complexity: residues 52–88 and 100–117; these read NTNT…SPSV and NKIN…NNNN. Over residues 127–136 the composition is skewed to polar residues; that stretch reads LKLSNTMIIK. Low complexity-rich tracts occupy residues 137–191, 250–271, 278–293, 310–327, and 334–413; these read NNNN…SNSN, SSSS…SSLL, NNST…NSSN, QAQV…QHQQ, and NLSS…TSFS. In terms of domain architecture, Tyrosine-protein phosphatase spans 422–715; the sequence is MRLEFEMIKK…IFIFKVINDV (294 aa). The span at 437–447 shows a compositional bias: basic residues; it reads KKSHKHHQRHY. Cys-650 functions as the Phosphocysteine intermediate in the catalytic mechanism. Positions 786 to 795 are enriched in polar residues; it reads PPQQQQDNPF. Disordered regions lie at residues 786-814 and 834-990; these read PPQQ…NISI and LQQQ…IKCF. Low complexity-rich tracts occupy residues 796–806 and 834–850; these read SKSSIKISPSP and LQQQ…DNPP. Polar residues predominate over residues 851 to 868; the sequence is LNMSSNSIKFPPVTSLSS. Composition is skewed to low complexity over residues 878–916 and 924–968; these read NDNN…DNNG and GSFL…SDNN.

This sequence belongs to the protein-tyrosine phosphatase family. Non-receptor class subfamily. As to expression, in the anterior-like and prestalk cell types.

It is found in the cytoplasm. It catalyses the reaction O-phospho-L-tyrosyl-[protein] + H2O = L-tyrosyl-[protein] + phosphate. Seems to dephosphorylate a protein of 130 kDa (p130). The protein is Tyrosine-protein phosphatase 3 (ptpC) of Dictyostelium discoideum (Social amoeba).